A 73-amino-acid polypeptide reads, in one-letter code: Protein BP4C (73 aa).

In terms of tissue distribution, pollen specific.

This Brassica napus (Rape) protein is Protein BP4C (BP4C).